We begin with the raw amino-acid sequence, 338 residues long: Holliday junction branch migration complex subunit RuvB (338 aa).

A large ATPase domain (RuvB-L) region spans residues 4-186; it reads ADRLIAPDNP…FGITQRLEYY (183 aa). Residues I25, R26, G67, K70, T71, T72, 133 to 135, R176, Y186, and R223 contribute to the ATP site; that span reads EDY. Mg(2+) is bound at residue T71. A small ATPAse domain (RuvB-S) region spans residues 187–257; sequence KVEDLQNIVQ…VADKALNMLD (71 aa). A head domain (RuvB-H) region spans residues 260–338; sequence AKGFDYMDRK…HFGIDKPSNR (79 aa). DNA-binding residues include R296, R315, and R320.

The protein belongs to the RuvB family. In terms of assembly, homohexamer. Forms an RuvA(8)-RuvB(12)-Holliday junction (HJ) complex. HJ DNA is sandwiched between 2 RuvA tetramers; dsDNA enters through RuvA and exits via RuvB. An RuvB hexamer assembles on each DNA strand where it exits the tetramer. Each RuvB hexamer is contacted by two RuvA subunits (via domain III) on 2 adjacent RuvB subunits; this complex drives branch migration. In the full resolvosome a probable DNA-RuvA(4)-RuvB(12)-RuvC(2) complex forms which resolves the HJ.

Its subcellular location is the cytoplasm. It carries out the reaction ATP + H2O = ADP + phosphate + H(+). Its function is as follows. The RuvA-RuvB-RuvC complex processes Holliday junction (HJ) DNA during genetic recombination and DNA repair, while the RuvA-RuvB complex plays an important role in the rescue of blocked DNA replication forks via replication fork reversal (RFR). RuvA specifically binds to HJ cruciform DNA, conferring on it an open structure. The RuvB hexamer acts as an ATP-dependent pump, pulling dsDNA into and through the RuvAB complex. RuvB forms 2 homohexamers on either side of HJ DNA bound by 1 or 2 RuvA tetramers; 4 subunits per hexamer contact DNA at a time. Coordinated motions by a converter formed by DNA-disengaged RuvB subunits stimulates ATP hydrolysis and nucleotide exchange. Immobilization of the converter enables RuvB to convert the ATP-contained energy into a lever motion, pulling 2 nucleotides of DNA out of the RuvA tetramer per ATP hydrolyzed, thus driving DNA branch migration. The RuvB motors rotate together with the DNA substrate, which together with the progressing nucleotide cycle form the mechanistic basis for DNA recombination by continuous HJ branch migration. Branch migration allows RuvC to scan DNA until it finds its consensus sequence, where it cleaves and resolves cruciform DNA. The polypeptide is Holliday junction branch migration complex subunit RuvB (Vibrio atlanticus (strain LGP32) (Vibrio splendidus (strain Mel32))).